Here is a 249-residue protein sequence, read N- to C-terminus: 2,3-bisphosphoglycerate-dependent phosphoglycerate mutase (249 aa).

Substrate contacts are provided by residues 10-17 (RHGESEWN), 23-24 (TG), R62, 89-92 (ERHY), K100, 116-117 (RR), and 185-186 (GN). Catalysis depends on H11, which acts as the Tele-phosphohistidine intermediate. E89 (proton donor/acceptor) is an active-site residue.

Belongs to the phosphoglycerate mutase family. BPG-dependent PGAM subfamily. In terms of assembly, homodimer.

It carries out the reaction (2R)-2-phosphoglycerate = (2R)-3-phosphoglycerate. It participates in carbohydrate degradation; glycolysis; pyruvate from D-glyceraldehyde 3-phosphate: step 3/5. Its function is as follows. Catalyzes the interconversion of 2-phosphoglycerate and 3-phosphoglycerate. The sequence is that of 2,3-bisphosphoglycerate-dependent phosphoglycerate mutase from Hamiltonella defensa subsp. Acyrthosiphon pisum (strain 5AT).